We begin with the raw amino-acid sequence, 425 residues long: TRAF family member-associated NF-kappa-B activator (425 aa).

Met1 is subject to N-acetylmethionine. The necessary for interaction with ZC3H12A stretch occupies residues 1–31 (MDKNIGEQLNKAYEAFRQACMDRDSAVKELQ). A coiled-coil region spans residues 22–62 (DRDSAVKELQQKTENYEQRIREQQEQLSLQQTIIDKLKSQL). Positions 70 to 191 (DNNYGCVPLL…QCTDKTDKQE (122 aa)) are necessary for interaction with TRAF6. Ser126 and Ser129 each carry phosphoserine. Residues 133 to 172 (HERGNIEKTFWDLKEEFHKICMLAKAQKDHLSKLNIPDTA) form an interaction with TBK1 and IKBKE region. Positions 172–191 (ATETQCSVPIQCTDKTDKQE) are TRAF family member interaction. Phosphoserine is present on residues Ser178 and Ser208. Thr213 bears the Phosphothreonine mark. 5 positions are modified to phosphoserine: Ser225, Ser228, Ser341, Ser354, and Ser357. Residues 393–420 (PRVCEFCQAVFPPSITSRGDFLRHLNSH) form a UBZ1-type zinc finger. Zn(2+)-binding residues include Cys396, Cys399, His416, and His420.

In terms of assembly, homodimer. Found in a deubiquitination complex with TANK, USP10 and ZC3H12A; this complex inhibits genotoxic stress- or interleukin-1-beta-mediated NF-kappaB activation by promoting IKBKG or TRAF6 deubiquitination. Interacts with IKBKG; this interaction increases in response to DNA damage. Interacts with TRAF6; this interaction increases in response to DNA damage and recruits USP10 to the ubiquitinated TRAF6. Interacts with USP10; this interaction increases in response to DNA damage. Interacts with ZC3H12A; this interaction increases in response to DNA damage. Interacts with TBK1. Interacts with IKBKE. Also interacts with TRAF1, TRAF2, and TRAF3 by binding to their TRAF-C domains; the interaction with TRAF2 is disrupted by the phosphorylation of TANK by IKBKE. Interacts more strongly with TRAF1 and TRAF2 than TRAF3. Interacts with IKBKG; the interaction is enhanced by IKBKE and TBK1. Part of a ternary complex consisting of TANK, IKBKB and IKBKG. As to quaternary structure, (Microbial infection) Interacts with vaccinia virus protein C6. (Microbial infection) Interacts with Seneca Valley virus protease 3C; this interaction allows the cleavage of TANK and subsequent suppression of host innate immunity. Phosphorylated by IKBKE. Post-translationally, (Microbial infection) Cleaved by encephalomyocarditis virus (EMCV) protease 3C. This cleavage allows the virus to disrupt the TANK-TBK1-IKKepsilon-IRF3 complex, thereby inhibiting the induction of the IFN-beta signal pathway. In terms of processing, (Microbial infection) Cleaved by Seneca Valley virus protease 3C allowing the virus to suppress interferon type-I through both RIG-I and Toll-like receptor-dependent pathways. As to expression, ubiquitous.

Its subcellular location is the cytoplasm. In terms of biological role, adapter protein involved in I-kappa-B-kinase (IKK) regulation which constitutively binds TBK1 and IKBKE playing a role in antiviral innate immunity. Acts as a regulator of TRAF function by maintaining them in a latent state. Blocks TRAF2 binding to LMP1 and inhibits LMP1-mediated NF-kappa-B activation. Negatively regulates NF-kappaB signaling and cell survival upon DNA damage. Plays a role as an adapter to assemble ZC3H12A, USP10 in a deubiquitination complex which plays a negative feedback response to attenuate NF-kappaB activation through the deubiquitination of IKBKG or TRAF6 in response to interleukin-1-beta (IL1B) stimulation or upon DNA damage. Promotes UBP10-induced deubiquitination of TRAF6 in response to DNA damage. May control negatively TRAF2-mediated NF-kappa-B activation signaled by CD40, TNFR1 and TNFR2. The polypeptide is TRAF family member-associated NF-kappa-B activator (TANK) (Homo sapiens (Human)).